Reading from the N-terminus, the 172-residue chain is Co-chaperone protein HscB homolog (172 aa).

Positions 2–69 constitute a J domain; sequence NHFELFNLPV…DSRAAYLLAL (68 aa).

This sequence belongs to the HscB family. In terms of assembly, interacts with HscA and stimulates its ATPase activity.

Functionally, co-chaperone involved in the maturation of iron-sulfur cluster-containing proteins. Seems to help targeting proteins to be folded toward HscA. The chain is Co-chaperone protein HscB homolog from Acinetobacter baumannii (strain SDF).